Here is a 480-residue protein sequence, read N- to C-terminus: Glutamate--tRNA ligase (480 aa).

The 'HIGH' region signature appears at 21-31; that stretch reads PSPTGYLHVGG. The Zn(2+) site is built by Cys110, Cys112, Cys137, and His139. The 'KMSKS' region signature appears at 248–252; the sequence is KLSKR. Lys251 is an ATP binding site.

Belongs to the class-I aminoacyl-tRNA synthetase family. Glutamate--tRNA ligase type 1 subfamily. As to quaternary structure, monomer. Zn(2+) serves as cofactor.

It localises to the cytoplasm. The enzyme catalyses tRNA(Glu) + L-glutamate + ATP = L-glutamyl-tRNA(Glu) + AMP + diphosphate. Its function is as follows. Catalyzes the attachment of glutamate to tRNA(Glu) in a two-step reaction: glutamate is first activated by ATP to form Glu-AMP and then transferred to the acceptor end of tRNA(Glu). This is Glutamate--tRNA ligase from Histophilus somni (strain 129Pt) (Haemophilus somnus).